Reading from the N-terminus, the 304-residue chain is Tyrosine recombinase XerD (304 aa).

Residues 6-91 (EPWRKTLETF…AIRSFHKFLL (86 aa)) enclose the Core-binding (CB) domain. In terms of domain architecture, Tyr recombinase spans 112–298 (YLPSVLTIEE…DRSFIKEVHK (187 aa)). Residues R155, K179, H250, R253, and H276 contribute to the active site. Y285 serves as the catalytic O-(3'-phospho-DNA)-tyrosine intermediate.

The protein belongs to the 'phage' integrase family. XerD subfamily. As to quaternary structure, forms a cyclic heterotetrameric complex composed of two molecules of XerC and two molecules of XerD.

It localises to the cytoplasm. Site-specific tyrosine recombinase, which acts by catalyzing the cutting and rejoining of the recombining DNA molecules. The XerC-XerD complex is essential to convert dimers of the bacterial chromosome into monomers to permit their segregation at cell division. It also contributes to the segregational stability of plasmids. The protein is Tyrosine recombinase XerD of Chlorobaculum tepidum (strain ATCC 49652 / DSM 12025 / NBRC 103806 / TLS) (Chlorobium tepidum).